A 299-amino-acid polypeptide reads, in one-letter code: Oxygen-dependent coproporphyrinogen-III oxidase (299 aa).

Ser-92 provides a ligand contact to substrate. Positions 96 and 106 each coordinate a divalent metal cation. His-106 serves as the catalytic Proton donor. A substrate-binding site is contributed by 108-110 (NVR). His-145 and His-175 together coordinate a divalent metal cation. Positions 240–275 (YVEFNLVWDRGTLFGLQTGGRTESILMSMPPLVRWE) are important for dimerization. Residue 258–260 (GGR) participates in substrate binding.

It belongs to the aerobic coproporphyrinogen-III oxidase family. In terms of assembly, homodimer. It depends on a divalent metal cation as a cofactor.

The protein resides in the cytoplasm. It catalyses the reaction coproporphyrinogen III + O2 + 2 H(+) = protoporphyrinogen IX + 2 CO2 + 2 H2O. It participates in porphyrin-containing compound metabolism; protoporphyrin-IX biosynthesis; protoporphyrinogen-IX from coproporphyrinogen-III (O2 route): step 1/1. Involved in the heme biosynthesis. Catalyzes the aerobic oxidative decarboxylation of propionate groups of rings A and B of coproporphyrinogen-III to yield the vinyl groups in protoporphyrinogen-IX. The chain is Oxygen-dependent coproporphyrinogen-III oxidase from Salmonella schwarzengrund (strain CVM19633).